A 37-amino-acid polypeptide reads, in one-letter code: Potassium channel toxin alpha-KTx 3.13 (37 aa).

3 cysteine pairs are disulfide-bonded: Cys7-Cys27, Cys13-Cys32, and Cys17-Cys34. Position 37 is a lysine amide (Lys37).

The protein belongs to the short scorpion toxin superfamily. Potassium channel inhibitor family. Alpha-KTx 03 subfamily. In terms of tissue distribution, expressed by the venom gland.

It localises to the secreted. Its function is as follows. Blocks voltage-gated potassium channels Kv1.1/KCNA1 (IC(50)=203.15 pM), Kv1.2/KCNA2 (IC(50)=8.92 nM) from rat and human Kv1.3 KCNA3/KCNA3 (IC(50)=171 pM) potently. At 2 uM, also blocks Shaker IR and has a moderate effect on rat Kv1.6/KCNA6. The chain is Potassium channel toxin alpha-KTx 3.13 from Mesobuthus eupeus (Lesser Asian scorpion).